Here is a 554-residue protein sequence, read N- to C-terminus: MFCIQCEQTIRTPAGNGCSYSQGMCGKLAATSDLQDLLIYMLQGVSVYAVKAREQGIIDAEIDSFVPKAFFSTLTNVNFDDERIMAYAQQAAKYRTQLKASYEAACEQAGIVAEQVPQVAQLVLGTSKVEMLAQAPIALLNKDKHNVHEDIMGLRLLCLYGLKGAAAYMEHARVLGQTDADVAGRFHEIMSFLGEPSVDGDKLFTTAMDIGQLNYRIMAMLDAGETQAFGHPEPTVVNTKSVKGKAILVSGHDMKDLELILEQTVGKGINVFTHGEMLPALAYPAFKKYPHLVGNYGSAWQNQQQEFANFPGAVVMTSNCIIDPNVGSYSDRIFTRSIVGWPGVVHIEGDDFSAVIDKALVLEGFIYDEIPHTITIGFARNALMAAAPAVVENVKSGAIKHFFLVGGCDGDKADRSYFTELAKSTPKDSLILTLGCGKYKFNKLEFGDINGIPRLLDVGQCNDAYSAIQLAIALAEVFECNINELPLSLVLSWFEQKAIVVLLTLLSLGVKNMRTGPTPPAFLTANLAKILEEKFGLRNTTTVEADLKTMLNVA.

4 residues coordinate [2Fe-2S] cluster: C3, C6, C18, and C25. Hybrid [4Fe-2O-2S] cluster contacts are provided by H252, E276, C320, C408, C436, C461, E495, and K497. Position 408 is a cysteine persulfide (C408).

It belongs to the HCP family. The cofactor is [2Fe-2S] cluster. Requires hybrid [4Fe-2O-2S] cluster as cofactor.

The protein resides in the cytoplasm. It carries out the reaction A + NH4(+) + H2O = hydroxylamine + AH2 + H(+). Its function is as follows. Catalyzes the reduction of hydroxylamine to form NH(3) and H(2)O. The polypeptide is Hydroxylamine reductase (Shewanella baltica (strain OS155 / ATCC BAA-1091)).